Here is a 294-residue protein sequence, read N- to C-terminus: 4-hydroxy-tetrahydrodipicolinate synthase (294 aa).

Position 45 (Thr45) interacts with pyruvate. The active-site Proton donor/acceptor is Tyr133. Lys162 serves as the catalytic Schiff-base intermediate with substrate. Val204 lines the pyruvate pocket.

Belongs to the DapA family. As to quaternary structure, homotetramer; dimer of dimers.

The protein resides in the cytoplasm. The enzyme catalyses L-aspartate 4-semialdehyde + pyruvate = (2S,4S)-4-hydroxy-2,3,4,5-tetrahydrodipicolinate + H2O + H(+). Its pathway is amino-acid biosynthesis; L-lysine biosynthesis via DAP pathway; (S)-tetrahydrodipicolinate from L-aspartate: step 3/4. In terms of biological role, catalyzes the condensation of (S)-aspartate-beta-semialdehyde [(S)-ASA] and pyruvate to 4-hydroxy-tetrahydrodipicolinate (HTPA). The polypeptide is 4-hydroxy-tetrahydrodipicolinate synthase (Bartonella bacilliformis (strain ATCC 35685 / KC583 / Herrer 020/F12,63)).